Consider the following 409-residue polypeptide: Magnesium-protoporphyrin IX monomethyl ester [oxidative] cyclase, chloroplastic (409 aa).

2 disordered regions span residues 1 to 23 (MAAE…SNPS) and 36 to 60 (RMSA…TKKE). The transit peptide at 1–36 (MAAEMALVKPISKFSSPKLSNPSKFLSGRRFSTVIR) directs the protein to the chloroplast. A compositionally biased stretch (polar residues) spans 13–23 (KFSSPKLSNPS).

The protein belongs to the AcsF family. In terms of assembly, part of the FLU-containing chloroplast membrane complex composed of FLU, CRD1, PORB, PORC, CHLP and HEMA1. Interacts with YCF54 in chloroplasts. It depends on Fe cation as a cofactor.

Its subcellular location is the plastid. The protein localises to the chloroplast inner membrane. It is found in the chloroplast thylakoid membrane. The enzyme catalyses Mg-protoporphyrin IX 13-monomethyl ester + 3 NADPH + 3 O2 + 2 H(+) = 3,8-divinyl protochlorophyllide a + 3 NADP(+) + 5 H2O. It participates in porphyrin-containing compound metabolism; chlorophyll biosynthesis. Its function is as follows. Catalytic component of the MgProto monomethylester (MgProtoME) cyclase complex that catalyzes the formation of the isocyclic ring in chlorophyll biosynthesis. Mediates the cyclase reaction, which results in the formation of divinylprotochlorophyllide (Pchlide) characteristic of all chlorophylls from magnesium-protoporphyrin IX 13-monomethyl ester (MgPMME). In Arabidopsis thaliana (Mouse-ear cress), this protein is Magnesium-protoporphyrin IX monomethyl ester [oxidative] cyclase, chloroplastic.